We begin with the raw amino-acid sequence, 296 residues long: Cobalamin trafficking protein CblD (296 aa).

Residues 1-38 (MAHVLCNRARLVSYLPGFCSLVKRVINPRAFSTAGSSG) constitute a mitochondrion transit peptide. Lys203 bears the N6-acetyllysine mark.

As to quaternary structure, heterodimer with MMACHC. Forms a multiprotein complex with MMACHC, MTR and MTRR.

It localises to the cytoplasm. It is found in the mitochondrion. In terms of biological role, involved in cobalamin metabolism and trafficking. Plays a role in regulating the biosynthesis and the proportion of two coenzymes, methylcob(III)alamin (MeCbl) and 5'-deoxyadenosylcobalamin (AdoCbl). Promotes oxidation of cob(II)alamin bound to MMACHC. The processing of cobalamin in the cytosol occurs in a multiprotein complex composed of at least MMACHC, MMADHC, MTRR (methionine synthase reductase) and MTR (methionine synthase) which may contribute to shuttle safely and efficiently cobalamin towards MTR in order to produce methionine. The protein is Cobalamin trafficking protein CblD of Mus musculus (Mouse).